We begin with the raw amino-acid sequence, 319 residues long: MTNTKSNVTKKSLHPRNKHTGNYDFPALIKACAELKPFVETNQYGNESINFSDPQAVKALNKALLAHFYNVPFWDIPQGYLCPPIPGRADYIHNIADLLAITNEGTIPTGKKVKGLDVGVGANCVYLIIGNREYQWSFVGSDIDPQSIKMASFIANNNPSLKGIECRLQKNEENIFKGIIKPTEFFDFTMCNPPFHASEAEATAGTERKQKNLAANKAKKGHAFQEMQNAKALNFGGQKAELWCEGGELAFILKMAQQSREFSLQVQWFTTLISKKENVAELYKELEKIGVKTIKTIEMAQGQKISRFVAWTYQANVNL.

It belongs to the methyltransferase superfamily. METTL16/RlmF family.

Its subcellular location is the cytoplasm. The catalysed reaction is adenosine(1618) in 23S rRNA + S-adenosyl-L-methionine = N(6)-methyladenosine(1618) in 23S rRNA + S-adenosyl-L-homocysteine + H(+). Functionally, specifically methylates the adenine in position 1618 of 23S rRNA. In Aliivibrio fischeri (strain ATCC 700601 / ES114) (Vibrio fischeri), this protein is Ribosomal RNA large subunit methyltransferase F.